The chain runs to 163 residues: Putative 4-hydroxy-4-methyl-2-oxoglutarate aldolase (163 aa).

Substrate is bound by residues 79 to 82 and Arg-101; that span reads GDQL. An a divalent metal cation-binding site is contributed by Asp-102.

This sequence belongs to the class II aldolase/RraA-like family. In terms of assembly, homotrimer. A divalent metal cation serves as cofactor.

It catalyses the reaction 4-hydroxy-4-methyl-2-oxoglutarate = 2 pyruvate. It carries out the reaction oxaloacetate + H(+) = pyruvate + CO2. In terms of biological role, catalyzes the aldol cleavage of 4-hydroxy-4-methyl-2-oxoglutarate (HMG) into 2 molecules of pyruvate. Also contains a secondary oxaloacetate (OAA) decarboxylase activity due to the common pyruvate enolate transition state formed following C-C bond cleavage in the retro-aldol and decarboxylation reactions. The protein is Putative 4-hydroxy-4-methyl-2-oxoglutarate aldolase of Dechloromonas aromatica (strain RCB).